Here is a 141-residue protein sequence, read N- to C-terminus: Large ribosomal subunit protein uL11 (141 aa).

It belongs to the universal ribosomal protein uL11 family. As to quaternary structure, part of the ribosomal stalk of the 50S ribosomal subunit. Interacts with L10 and the large rRNA to form the base of the stalk. L10 forms an elongated spine to which L12 dimers bind in a sequential fashion forming a multimeric L10(L12)X complex. In terms of processing, one or more lysine residues are methylated.

Its function is as follows. Forms part of the ribosomal stalk which helps the ribosome interact with GTP-bound translation factors. The polypeptide is Large ribosomal subunit protein uL11 (Wolinella succinogenes (strain ATCC 29543 / DSM 1740 / CCUG 13145 / JCM 31913 / LMG 7466 / NCTC 11488 / FDC 602W) (Vibrio succinogenes)).